Consider the following 395-residue polypeptide: Nickel and cobalt resistance protein CnrB (395 aa).

Residues 13–33 form a helical membrane-spanning segment; sequence MIAGVAAVAAAVGFGAAHLPV. Positions 35–55 are disordered; sequence EKSPASTQAPEAQKPQSAPVK. Polar residues predominate over residues 37-50; that stretch reads SPASTQAPEAQKPQ. Residues 140–193 are a coiled coil; sequence AAERKVAQAKADLARKTYEREASLFQQGVTPRQEMEAAKAALDVAQAEALRAAT.

The protein belongs to the membrane fusion protein (MFP) (TC 8.A.1) family.

The protein localises to the cell inner membrane. Its function is as follows. The products of the genes cnrA, cnrB, and cnrC are likely to form a membrane-bound protein complex catalyzing an energy-dependent efflux of Ni(2+) and Co(2+). The mechanism of action of the CnrCBA complex may be that of a proton/cation antiporter. This chain is Nickel and cobalt resistance protein CnrB (cnrB), found in Cupriavidus metallidurans (strain ATCC 43123 / DSM 2839 / NBRC 102507 / CH34) (Ralstonia metallidurans).